The chain runs to 243 residues: Cell division protein FtsQ (243 aa).

Residues 1–19 are Cytoplasmic-facing; that stretch reads MKRYNAKRKTHRNLKSIKK. Residues 20–40 form a helical membrane-spanning segment; that stretch reads LIPTVLALLAFVSLLAGIITL. Residues 41-243 are Periplasmic-facing; that stretch reads HNPKTLPFRQ…SNGLAIQWKN (203 aa). The POTRA domain occupies 46–115; the sequence is LPFRQIKITV…NELEIQVEEQ (70 aa).

Belongs to the FtsQ/DivIB family. FtsQ subfamily. As to quaternary structure, part of a complex composed of FtsB, FtsL and FtsQ.

Its subcellular location is the cell inner membrane. In terms of biological role, essential cell division protein. May link together the upstream cell division proteins, which are predominantly cytoplasmic, with the downstream cell division proteins, which are predominantly periplasmic. May control correct divisome assembly. In Coxiella burnetii (strain RSA 493 / Nine Mile phase I), this protein is Cell division protein FtsQ.